We begin with the raw amino-acid sequence, 301 residues long: GVLILSGDHLYRMDYMDFVQSHRQRDAGISICCLPIDGSRASDFGLMKIDDTGRVISFSEKPRGADLKEMEEAEKKPYIASMGVYIFKKEILLNLLRWRFPTANDFGSEIIPAAAREINVKAYLFNDYWEDIGTIKSFFEANLALAEQPSKFSFYDASKPMYTSRRNLPPSMISGSKITDSIISHGCFLDKCRVEHSVVGIRSRIGSNVHLKDTVMLGADFYETDMERGDQLAEGKVPIGIGENTSIQNCIIDKNARIGKNVTIANAEGVQEADRASEGFHIRSGITVVLKNSVIADGLVI.

Belongs to the bacterial/plant glucose-1-phosphate adenylyltransferase family. In terms of assembly, heterotetramer.

It is found in the plastid. It localises to the chloroplast. Its subcellular location is the amyloplast. It catalyses the reaction alpha-D-glucose 1-phosphate + ATP + H(+) = ADP-alpha-D-glucose + diphosphate. It functions in the pathway glycan biosynthesis; starch biosynthesis. Insensitive to 3'phosphoglycerate and orthophosphate. In terms of biological role, this protein plays a role in synthesis of starch. It catalyzes the synthesis of the activated glycosyl donor, ADP-glucose from Glc-1-P and ATP. This is Glucose-1-phosphate adenylyltransferase large subunit (AGA.1) from Triticum aestivum (Wheat).